The sequence spans 111 residues: WAP four-disulfide core domain protein 12 (111 aa).

Residues 1–23 (MRSSRFLVLMVSLALVTLVASEG) form the signal peptide. Positions 27-74 (NTEKPGVCPADNVRCIKSDPPQCHTDQDCQGIRKCCYLHCGFKCVIPV) constitute a WAP domain. Cystine bridges form between cysteine 34/cysteine 62, cysteine 41/cysteine 66, cysteine 49/cysteine 61, and cysteine 55/cysteine 70.

It is found in the secreted. In terms of biological role, antibacterial protein. Putative acid-stable proteinase inhibitor. The sequence is that of WAP four-disulfide core domain protein 12 (WFDC12) from Saimiri boliviensis boliviensis (Bolivian squirrel monkey).